We begin with the raw amino-acid sequence, 68 residues long: Alpha-conotoxin-like Ca1.2 (68 aa).

A signal peptide spans 1-21 (MGMRMMFTVFLLVVLATTVVS). Positions 22–48 (FTSDRASEGRNAAAKDKASDLVALTVR) are excised as a propeptide. Disulfide bonds link Cys50/Cys56 and Cys51/Cys64. The lacks the Ser-Xaa-Pro motif that is crucial for potent interaction with nAChR stretch occupies residues 52-54 (AIR). Sulfotyrosine is present on Tyr63. Cys64 bears the Cysteine amide mark. Positions 65-68 (GGIY) are excised as a propeptide.

It belongs to the conotoxin A superfamily. Expressed by the venom duct.

The protein resides in the secreted. In terms of biological role, alpha-conotoxins act on postsynaptic membranes, they bind to the nicotinic acetylcholine receptors (nAChR) and thus inhibit them. Has possibly a distinct nAChR binding mode from other alpha-conotoxins, due to a different three residue motif (lacks the Ser-Xaa-Pro motif). The protein is Alpha-conotoxin-like Ca1.2 of Conus caracteristicus (Characteristic cone).